Reading from the N-terminus, the 510-residue chain is Cytochrome P450 monooxygenase macH (510 aa).

A helical transmembrane segment spans residues 7 to 29; sequence LPVSLWLIAAGTFAVYHAIRAVY. Heme is bound at residue C454.

This sequence belongs to the cytochrome P450 family. The cofactor is heme.

Its subcellular location is the membrane. It participates in secondary metabolite biosynthesis; terpenoid biosynthesis. In terms of biological role, cytochrome P450 monooxygenase; part of the gene cluster that mediates the biosynthesis of macrophorins, isoprenoid epoxycyclohexenones containing cyclized drimane moieties. The first step of the pathway is the synthesis of 6-methylsalicylic acid (6-MSA) by the polyketide synthase macA. 6-MSA is then converted to m-cresol by the decarboxylase macB. The cytochrome P450 monooxygenase macC then catalyzes the oxidation of m-cresol to toluquinol. Epoxidation of toluquinol is then performed by the short chain dehydrogenase macD, with the help of macE, and a further prenylation by macG leads to 7-deacetoxyyanuthone A. The next step is the hydroxylation of C-22 of 7-deacetoxyyanuthone A by the cytochrome P450 monooxygenase macH to yield 22-deacetylyanuthone A. O-Mevalon transferase macI then attaches mevalon to the hydroxyl group of 22-deacetylyanuthone A to produce yanuthone E. The terpene cyclase macJ catalyzes the cyclization of 22-deacetylyanuthone A to macrophorin A. MacJ is also able to catalyze cyclization of yanuthone E and 7-deacetoxyyanuthone A to their corresponding macrophorins. The macJ products can be further modified by macH and macJ, as well as by the FAD-dependent monooxygenase macF, to produce additional macrophorins, including 4'-oxomacrophorin A, 4'-oxomacrophorin D and 4'-oxomacrophorin E. The sequence is that of Cytochrome P450 monooxygenase macH from Penicillium terrestre.